Here is a 432-residue protein sequence, read N- to C-terminus: Heme-based aerotactic transducer HemAT (432 aa).

The 237-residue stretch at 184–420 (YNQTRDEQEE…EVSRAVSHVA (237 aa)) folds into the Methyl-accepting transducer domain.

It belongs to the methyl-accepting chemotaxis (MCP) protein family. In terms of assembly, homotetramer.

Its function is as follows. Heme-containing signal transducer responsible for aerotaxis, the migratory response toward or away from oxygen. This Bacillus subtilis (strain 168) protein is Heme-based aerotactic transducer HemAT (hemAT).